We begin with the raw amino-acid sequence, 1024 residues long: Hemolysin, plasmid (1024 aa).

A compositionally biased stretch (polar residues) spans 20–32; the sequence is AANKLHSAGQSTK. Residues 20–39 form a disordered region; the sequence is AANKLHSAGQSTKDALKKAA. Transmembrane regions (helical) follow at residues 238 to 260, 268 to 327, and 365 to 411; these read IGAG…ILSN, KAAA…LSIA, and DASL…GILE. Residues Lys564 and Lys690 are each lipidated (N6-myristoyl lysine). Hemolysin-type calcium-binding repeat units lie at residues 732–749, 750–767, 768–785, 786–803, 816–833, and 834–851; these read FGSK…DDLI, EGND…NDTL, SGGN…NDKL, IGVA…DDEF, FGGK…ADLL, and DGGE…NDIY.

It belongs to the RTX prokaryotic toxin (TC 1.C.11) family. In terms of processing, myristoylated by HlyC; the toxin only becomes active when modified. Mainly myristoylated, while a minor fraction is acylated with pentadecanoyl (C15:0; 26%) and heptadecanoyl (C17:0; 6%) fatty acyl groups. Fatty acylation is involved in binding to host membranes and promotes the irreversible insertion of Hemolysin into the host cell membrane. Can be activated by both myristoylation and palmitoylation, but HlyC catalyzes lysine myristoylation.

Its subcellular location is the secreted. The protein resides in the host cell membrane. Bacterial hemolysins are exotoxins that attack blood cell membranes and cause cell rupture by forming a pore. In Escherichia coli, this protein is Hemolysin, plasmid.